We begin with the raw amino-acid sequence, 771 residues long: Chaperone protein dnaK3 (771 aa).

Threonine 198 carries the post-translational modification Phosphothreonine; by autocatalysis. The tract at residues phenylalanine 624–phenylalanine 771 is disordered. Composition is skewed to basic and acidic residues over residues tyrosine 630 to aspartate 652 and tyrosine 708 to alanine 734.

Belongs to the heat shock protein 70 family.

Functionally, acts as a chaperone. The sequence is that of Chaperone protein dnaK3 (dnaK3) from Synechocystis sp. (strain ATCC 27184 / PCC 6803 / Kazusa).